Here is a 117-residue protein sequence, read N- to C-terminus: Ubiquitin-like protein 3 (117 aa).

Residues 10–88 form the Ubiquitin-like domain; that stretch reads INLRLILVSG…PFGKTTVMHL (79 aa). C113 carries S-palmitoyl cysteine lipidation. A Cysteine methyl ester modification is found at C114. A lipid anchor (S-geranylgeranyl cysteine) is attached at C114. Positions 115 to 117 are cleaved as a propeptide — removed in mature form; sequence VIL.

It localises to the cell membrane. The sequence is that of Ubiquitin-like protein 3 (Ubl3) from Mus musculus (Mouse).